The primary structure comprises 352 residues: Secreted RxLR effector protein 122 (352 aa).

Positions 1-21 are cleaved as a signal peptide; it reads MRGAYYVLIALLVVASSQTSA. The RxLR-dEER motif lies at 48–65; that stretch reads QFLRGSRNVPGDLAHEER. The segment covering 280–290 has biased composition (low complexity); that stretch reads RGGTTGASRGT. The segment at 280–352 is disordered; sequence RGGTTGASRG…VEPEGHRSKP (73 aa). The span at 302-315 shows a compositional bias: polar residues; it reads AASTSKGKSSVFTE.

Belongs to the RxLR effector family.

The protein resides in the secreted. Its subcellular location is the host nucleus. In terms of biological role, secreted effector that acts as an elicitor that induces cell death in host plant cells. The protein is Secreted RxLR effector protein 122 of Plasmopara viticola (Downy mildew of grapevine).